We begin with the raw amino-acid sequence, 1696 residues long: PH domain leucine-rich repeat protein phosphatase 1 (1696 aa).

Residue methionine 1 is modified to N-acetylmethionine. Disordered stretches follow at residues 1–97 and 222–398; these read MEPA…GGGA and LGHG…VVGE. A compositionally biased stretch (low complexity) spans 79-92; it reads VPQPAAGGAAPVTA. Polar residues predominate over residues 313 to 325; that stretch reads DTESFSLSPSAES. Position 378 is a phosphoserine (serine 378). The 101-residue stretch at 499-599 folds into the PH domain; it reads RIQLSGMYNV…WLRQVSKVAS (101 aa). LRR repeat units follow at residues 601-622, 624-645, 655-676, 678-699, 701-722, 724-746, 836-857, 858-879, 881-902, 904-925, 926-947, 950-971, 976-996, 1000-1021, 1024-1045, 1047-1068, 1069-1090, and 1092-1113; these read RISS…LFYS, DLTH…PAAR, KLKS…VCSI, TLAE…VGAM, NLQT…LENM, QLSY…EKLT, FLKA…PVPN, YLSY…VCES, KLEV…LFCN, SLRK…LERT, SVEV…LLMK, SLRF…TLSE, ILQE…PLLT, RLKI…KMAK, ELEE…IMNC, RMHT…MQLP, EVKC…ENLP, and KLQE…SLEL. Positions 1138 to 1385 constitute a PPM-type phosphatase domain; sequence SHGYTEASGV…DSISAVVVQL (248 aa). Residues aspartate 1173, glycine 1174, lysine 1337, and aspartate 1376 each contribute to the Mn(2+) site. 2 disordered regions span residues 1422–1473 and 1610–1696; these read RPSD…SPAY and KPGG…DTPL. Low complexity-rich tracts occupy residues 1431–1452, 1647–1660, and 1670–1680; these read SSSS…MSSE, QQQQ…QQQQ, and QAQAQAQAQAQ. The PDZ-binding motif lies at 1694–1696; it reads TPL.

As to quaternary structure, interacts with the nucleotide free form of K-Ras (KRAS) via its LRR repeats. Interacts with AKT2, AKT3 and PRKCB isoform beta-II. Interacts with WDR48 and USP12. It depends on Mn(2+) as a cofactor. In terms of tissue distribution, mainly present in brain (at protein level). Isoform 2 is more abundant in adult brain neurons than isoform 1 in. Isoforms 1 and 2 are expressed in the retina but not found in rod outer segments.

It is found in the cytoplasm. Its subcellular location is the membrane. It localises to the cell membrane. The protein localises to the nucleus. The protein resides in the nucleoplasm. It is found in the nucleus membrane. The enzyme catalyses O-phospho-L-seryl-[protein] + H2O = L-seryl-[protein] + phosphate. It catalyses the reaction O-phospho-L-threonyl-[protein] + H2O = L-threonyl-[protein] + phosphate. Its activity is regulated as follows. Insensitive to okadaic acid. Deubiquitination by WDR48-USP12 complex positively regulates PHLPP1 stability. Functionally, protein phosphatase involved in regulation of Akt and PKC signaling. Mediates dephosphorylation in the C-terminal domain hydrophobic motif of members of the AGC Ser/Thr protein kinase family; specifically acts on 'Ser-473' of AKT2 and AKT3, 'Ser-660' of PRKCB and 'Ser-657' of PRKCA. Isoform 2 seems to have a major role in regulating Akt signaling in hippocampal neurons while isoform 1 may promote Akt and PKC activation and inhibit ERK signaling. Akt regulates the balance between cell survival and apoptosis through a cascade that primarily alters the function of transcription factors that regulate pro- and antiapoptotic genes. Dephosphorylation of 'Ser-473' of Akt triggers apoptosis and suppression of tumor growth. Dephosphorylation of PRKCA and PRKCB leads to their destabilization and degradation. Dephosphorylates STK4 on 'Thr-387' leading to STK4 activation and apoptosis. Dephosphorylates RPS6KB1 and is involved in regulation of cap-dependent translation. Inhibits cancer cell proliferation and may act as a tumor suppressor. Dephosphorylates RAF1 inhibiting its kinase activity. May act as a negative regulator of K-Ras signaling in membrane rafts. Involved in the hippocampus-dependent long-term memory formation. Involved in circadian control by regulating the consolidation of circadian periodicity after resetting. Involved in development and function of regulatory T-cells. This is PH domain leucine-rich repeat protein phosphatase 1 (Phlpp1) from Rattus norvegicus (Rat).